We begin with the raw amino-acid sequence, 223 residues long: Small ribosomal subunit protein uS3 (223 aa).

Residues 38-106 (LKAELKEKLK…EVYIDIQEVH (69 aa)) form the KH type-2 domain.

The protein belongs to the universal ribosomal protein uS3 family. Part of the 30S ribosomal subunit. Forms a tight complex with proteins S10 and S14.

In terms of biological role, binds the lower part of the 30S subunit head. Binds mRNA in the 70S ribosome, positioning it for translation. The sequence is that of Small ribosomal subunit protein uS3 from Koribacter versatilis (strain Ellin345).